Consider the following 883-residue polypeptide: MEQDKENKQSLPSKYNPKEVEEGRYQFWLDGKFFEATGDPDKEPYSIVIPPPNVTGRLHLGHAWDTSMQDTITRMKRMQGYDVLWLPGMDHAGIATQAKVEARLKESGTNRYELGREKFLEKAWEWKEEYAAFIRSQWEKLGLGLDYSRERFTLDEGLSDAVREVFVKLYEKGLIYRGEYIINWDPSTKTALSDIEVIYEEIQGKFYHMRYPIKGSDETIEIATTRPETMLGDTAVAVHPKDERYQHLIGKTVILPIVGREIEIVADDYVDMELGSGAVKITPAHDPNDFEIGNRHQLERILVMNEDGSMNENAGKYQGLDRFECRKQIVKDLKEQGVMFNIEERTHQVGHSERSGAVVEPYLSTQWFVKMDPLAKSALDMQADADEKVNFVPDRFERTYFNWMDNIRDWCISRQLWWGHRIPAWYHKETKEIYVGKEAPADIENWEQDEDVLDTWFSSALWPFSTMGWPNEDSADLKRYFPTNVLVTGYDIIFFWVSRMIFQSKEFMNEKPFEDTLLHGLIRDADGRKMSKSLGNGVDPMDVIEKYGADSLRYFLMTGSTPGQDLRFHWEKVESTWNFANKVWNASRFSIMNMEGFTYEDIDLTGELSLPDRWILARLNETIEQVTRNSNKYEFGEAGRHLYNFIWDEFCDWYIEMAKLSLYGEDENKKKTTRSVLAHVLDQTMRMLHPFMPFITEEIWQQLPHEGPSITVSKWPEVNSEFDNPQAVQEMQRLVSIIRSVRNSRAEVDTPMSKQIKMLIKTENEQLTAELEKNRDYLERFCNPSELSISTVIEAPDKAMTSVVTGAEIFLPLEGLIDFDKEIKRLENELAKWTKEVERVQKKLSNQGFVSKAPESVVEEEKRKEKDYLDKQAKVKTRLSELK.

A 'HIGH' region motif is present at residues 52–62 (PNVTGRLHLGH). Positions 529–533 (KMSKS) match the 'KMSKS' region motif. Lys532 contributes to the ATP binding site. Positions 813–848 (LEGLIDFDKEIKRLENELAKWTKEVERVQKKLSNQG) form a coiled coil.

Belongs to the class-I aminoacyl-tRNA synthetase family. ValS type 1 subfamily. As to quaternary structure, monomer.

The protein localises to the cytoplasm. The enzyme catalyses tRNA(Val) + L-valine + ATP = L-valyl-tRNA(Val) + AMP + diphosphate. Its function is as follows. Catalyzes the attachment of valine to tRNA(Val). As ValRS can inadvertently accommodate and process structurally similar amino acids such as threonine, to avoid such errors, it has a 'posttransfer' editing activity that hydrolyzes mischarged Thr-tRNA(Val) in a tRNA-dependent manner. This chain is Valine--tRNA ligase, found in Oceanobacillus iheyensis (strain DSM 14371 / CIP 107618 / JCM 11309 / KCTC 3954 / HTE831).